Consider the following 422-residue polypeptide: 2-(3-amino-3-carboxypropyl)histidine synthase subunit 1 (422 aa).

Residues cysteine 128, cysteine 234, and cysteine 363 each contribute to the [4Fe-4S] cluster site.

The protein belongs to the DPH1/DPH2 family. DPH1 subfamily. Component of the 2-(3-amino-3-carboxypropyl)histidine synthase complex composed of DPH1, DPH2, DPH3 and a NADH-dependent reductase, predominantly CBR1. [4Fe-4S] cluster is required as a cofactor.

Its subcellular location is the cytoplasm. The enzyme catalyses L-histidyl-[translation elongation factor 2] + S-adenosyl-L-methionine = 2-[(3S)-amino-3-carboxypropyl]-L-histidyl-[translation elongation factor 2] + S-methyl-5'-thioadenosine + H(+). It participates in protein modification; peptidyl-diphthamide biosynthesis. In terms of biological role, catalyzes the first step of diphthamide biosynthesis, a post-translational modification of histidine which occurs in elongation factor 2. DPH1 and DPH2 transfer a 3-amino-3-carboxypropyl (ACP) group from S-adenosyl-L-methionine (SAM) to a histidine residue, the reaction is assisted by a reduction system comprising DPH3 and a NADH-dependent reductase, predominantly CBR1. This is 2-(3-amino-3-carboxypropyl)histidine synthase subunit 1 (DPH1) from Kluyveromyces lactis (strain ATCC 8585 / CBS 2359 / DSM 70799 / NBRC 1267 / NRRL Y-1140 / WM37) (Yeast).